Consider the following 345-residue polypeptide: 4-hydroxy-2-oxovalerate aldolase 3 (345 aa).

The Pyruvate carboxyltransferase domain maps to 8 to 260 (ITVHDMTLRD…ETGVDVWKIQ (253 aa)). A substrate-binding site is contributed by 16–17 (RD). Residue D17 coordinates Mn(2+). The Proton acceptor role is filled by H20. Residues S170 and H199 each contribute to the substrate site. Residues H199 and H201 each coordinate Mn(2+). Residue Y290 coordinates substrate.

The protein belongs to the 4-hydroxy-2-oxovalerate aldolase family.

It catalyses the reaction (S)-4-hydroxy-2-oxopentanoate = acetaldehyde + pyruvate. This Comamonas testosteroni (Pseudomonas testosteroni) protein is 4-hydroxy-2-oxovalerate aldolase 3 (aphG).